A 273-amino-acid chain; its full sequence is SAGA-associated factor 29 homolog B (273 aa).

Residues 128–273 (EAYASLKGEQ…VVALPEGHRQ (146 aa)) enclose the SGF29 C-terminal domain. Histone H3K4me3 N-terminus binding stretches follow at residues 171–173 (DEE) and 220–223 (GTTA). The segment at 245-248 (FDDD) is histone H3K4me3 binding.

The protein belongs to the SGF29 family. Expressed in roots, rosette leaves, cauline leaves, stems and flowers.

The protein resides in the nucleus. Its function is as follows. Chromatin reader component of the transcription regulatory histone acetylation (HAT) complex SAGA. The protein is SAGA-associated factor 29 homolog B of Arabidopsis thaliana (Mouse-ear cress).